The following is a 507-amino-acid chain: Histidine ammonia-lyase (507 aa).

Residues 141–143 (ASG) constitute a cross-link (5-imidazolinone (Ala-Gly)). Ser-142 is subject to 2,3-didehydroalanine (Ser).

The protein belongs to the PAL/histidase family. Contains an active site 4-methylidene-imidazol-5-one (MIO), which is formed autocatalytically by cyclization and dehydration of residues Ala-Ser-Gly.

The protein localises to the cytoplasm. The catalysed reaction is L-histidine = trans-urocanate + NH4(+). The protein operates within amino-acid degradation; L-histidine degradation into L-glutamate; N-formimidoyl-L-glutamate from L-histidine: step 1/3. The polypeptide is Histidine ammonia-lyase (Burkholderia orbicola (strain MC0-3)).